The chain runs to 161 residues: PTS system glucose-specific EIIA component (161 aa).

Residues 31–135 enclose the PTS EIIA type-1 domain; it reads DPVFSKKIVG…SILTPVVISN (105 aa). H68 and H83 together coordinate Zn(2+). H83 functions as the Tele-phosphohistidine intermediate; for EIIA activity in the catalytic mechanism. H83 carries the post-translational modification Phosphohistidine; by HPr.

It depends on Zn(2+) as a cofactor.

Its subcellular location is the cytoplasm. Functionally, the phosphoenolpyruvate-dependent sugar phosphotransferase system (sugar PTS), a major carbohydrate active transport system, catalyzes the phosphorylation of incoming sugar substrates concomitantly with their translocation across the cell membrane. The enzyme II complex composed of PtsG and Crr is involved in glucose transport. The chain is PTS system glucose-specific EIIA component (crr) from Buchnera aphidicola subsp. Acyrthosiphon pisum (strain APS) (Acyrthosiphon pisum symbiotic bacterium).